A 232-amino-acid chain; its full sequence is Large ribosomal subunit protein uL1 (232 aa).

The protein belongs to the universal ribosomal protein uL1 family. Part of the 50S ribosomal subunit.

Functionally, binds directly to 23S rRNA. The L1 stalk is quite mobile in the ribosome, and is involved in E site tRNA release. In terms of biological role, protein L1 is also a translational repressor protein, it controls the translation of the L11 operon by binding to its mRNA. The sequence is that of Large ribosomal subunit protein uL1 from Lysinibacillus sphaericus (strain C3-41).